Here is a 23-residue protein sequence, read N- to C-terminus: Basic phospholipase A2 homolog CTs-K49c (23 aa).

Post-translationally, contains 7 disulfide bonds. Expressed by the venom gland.

It localises to the secreted. In terms of biological role, snake venom phospholipase A2 homolog that lacks catalytic activity. Shows myotoxic activities. Induces local edema a few hours after injection (5-10 ug) in the hind paw. In Trimeresurus stejnegeri (Chinese green tree viper), this protein is Basic phospholipase A2 homolog CTs-K49c.